The following is a 203-amino-acid chain: MKEAELSATESQDEIPKSNSLLIIEKLTKAVCSLYFINCFMVPSVDNLIEKYPKAIIIKIIDMILGAVTISLVIIVFFLYRKNGHFKNENKTKPKRCSKVVCPSCAARKKYPKWFQLKYLLLVSMTAFSFYFCTKIRFFFKTDQTINLHRLSQLFRLQLGWICTTALLFYFYDALILHSGFIEGYRCVNGKGAMSEGKTGQLN.

3 helical membrane-spanning segments follow: residues 60–80 (IIDM…FFLY), 114–134 (WFQL…YFCT), and 157–177 (LQLG…ALIL). 192 to 199 (GAMSEGKT) serves as a coordination point for ATP.

The protein resides in the membrane. This is an uncharacterized protein from Saccharomyces cerevisiae (strain ATCC 204508 / S288c) (Baker's yeast).